The primary structure comprises 109 residues: Parvalbumin beta (109 aa).

EF-hand domains follow at residues 38-73 (KSKDQLTKVFGVIDRDKSGYIEEDELKKFLQNFDGK) and 77-109 (LTDKETAEFLKEGDTDGDGKIGVEEFVVLVTKG). Residues D51, D53, S55, Y57, E59, E62, D90, D92, D94, K96, and E101 each contribute to the Ca(2+) site.

This sequence belongs to the parvalbumin family.

Functionally, in muscle, parvalbumin is thought to be involved in relaxation after contraction. It binds two calcium ions. The polypeptide is Parvalbumin beta (Boa constrictor (Boa)).